The primary structure comprises 1240 residues: Structural polyprotein (1240 aa).

The necessary for nucleocapsid assembly and virus assembly stretch occupies residues Met-1 to Pro-35. Residues Met-1 to Arg-102 are disordered. Pro residues predominate over residues Pro-23–Pro-34. The interval Leu-36–Lys-69 is host transcription inhibition. The short motif at Leu-43 to Leu-50 is the Supraphysiological nuclear export signal element. Residue Asn-49 is glycosylated (N-linked (GlcNAc...) asparagine; by host). Over residues Ala-65 to Arg-102 the composition is skewed to basic residues. Residues Lys-66–Pro-70 carry the Nuclear localization signal motif. A binding to the viral RNA region spans residues Lys-82–Thr-112. Positions Pro-97–Lys-111 are ribosome-binding. At Ser-109 the chain carries Phosphoserine. The region spanning Lys-111 to Trp-260 is the Peptidase S3 domain. Thr-112 is subject to Phosphothreonine. Residues His-137, Asp-159, and Ser-211 each act as charge relay system in the active site. The interval Ser-261–Ile-272 is functions as an uncleaved signal peptide for the precursor of protein E3/E2. Residues Ser-261 to Arg-682 are Extracellular-facing. Asn-271 and Asn-638 each carry an N-linked (GlcNAc...) asparagine; by host glycan. The chain crosses the membrane as a helical span at residues Tyr-683–Val-703. Over His-704–Ala-743 the chain is Cytoplasmic. 4 S-palmitoyl cysteine; by host lipidation sites follow: Cys-706, Cys-716, Cys-736, and Cys-737. Residues Leu-715 to Leu-735 are transient transmembrane before p62-6K protein processing. The Extracellular segment spans residues Asp-744–Gln-758. The chain crosses the membrane as a helical span at residues Asn-759–Val-779. A topological domain (cytoplasmic) is located at residue Arg-780. A helical transmembrane segment spans residues Cys-781–Glu-801. The Extracellular portion of the chain corresponds to His-802–Gly-1216. Residue Asn-834 is glycosylated (N-linked (GlcNAc...) asparagine; by host). 4 disulfides stabilise this stretch: Cys-848/Cys-913, Cys-861/Cys-893, Cys-862/Cys-895, and Cys-867/Cys-877. The E1 fusion peptide loop stretch occupies residues Val-883–Thr-900. Asn-933 carries N-linked (GlcNAc...) asparagine; by host glycosylation. 3 cysteine pairs are disulfide-bonded: Cys-1059–Cys-1071, Cys-1101–Cys-1176, and Cys-1106–Cys-1180. The helical transmembrane segment at Thr-1217–Phe-1237 threads the bilayer. The Cytoplasmic portion of the chain corresponds to His-1238–His-1240.

In terms of assembly, part of a tetrameric complex composed of host CRM1, host importin alpha/beta dimer and the viral capsid; this complex blocks the receptor-mediated transport through the nuclear pore. Interacts with host phosphatase PPP1CA; this interaction dephosphorylates the capsid protein, which increases its ability to bind to the viral genome. Interacts with host karyopherin KPNA4; this interaction allows the nuclear import of the viral capsid protein. Interacts with spike glycoprotein E2. Interacts with host IRAK1; the interaction leads to inhibition of IRAK1-dependent signaling. The precursor of protein E3/E2 and E1 form a heterodimer shortly after synthesis. As to quaternary structure, the precursor of protein E3/E2 and E1 form a heterodimer shortly after synthesis. Processing of the precursor of protein E3/E2 into E2 and E3 results in a heterodimer of the spike glycoproteins E2 and E1. Spike at virion surface are constituted of three E2-E1 heterodimers. After target cell attachment and endocytosis, E1 change conformation to form homotrimers. Interacts with 6K protein. In terms of assembly, processing of the precursor of protein E3/E2 into E2 and E3 results in a heterodimer of the spike glycoproteins E2 and E1. Spike at virion surface are constituted of three E2-E1 heterodimers. Interacts with 6K protein. Interacts with spike glycoprotein E1. Interacts with spike glycoprotein E2. Post-translationally, structural polyprotein: Specific enzymatic cleavages in vivo yield mature proteins. Capsid protein is auto-cleaved during polyprotein translation, unmasking a signal peptide at the N-terminus of the precursor of E3/E2. The remaining polyprotein is then targeted to the host endoplasmic reticulum, where host signal peptidase cleaves it into pE2, 6K and E1 proteins. pE2 is further processed to mature E3 and E2 by host furin in trans-Golgi vesicle. In terms of processing, phosphorylated on serine and threonine residues. Palmitoylated via thioester bonds. These palmitoylations may induce disruption of the C-terminus transmembrane. This would result in the reorientation of E2 C-terminus from lumenal to cytoplasmic side. Post-translationally, N-glycosylated. In terms of processing, palmitoylated via thioester bonds.

It is found in the virion. Its subcellular location is the host cytoplasm. It localises to the host cell membrane. The protein localises to the host nucleus. The protein resides in the virion membrane. The catalysed reaction is Autocatalytic release of the core protein from the N-terminus of the togavirus structural polyprotein by hydrolysis of a -Trp-|-Ser- bond.. In terms of biological role, forms an icosahedral capsid with a T=4 symmetry composed of 240 copies of the capsid protein surrounded by a lipid membrane through which penetrate 80 spikes composed of trimers of E1-E2 heterodimers. The capsid protein binds to the viral RNA genome at a site adjacent to a ribosome binding site for viral genome translation following genome release. Possesses a protease activity that results in its autocatalytic cleavage from the nascent structural protein. Following its self-cleavage, the capsid protein transiently associates with ribosomes, and within several minutes the protein binds to viral RNA and rapidly assembles into icosahedric core particles. The resulting nucleocapsid eventually associates with the cytoplasmic domain of the spike glycoprotein E2 at the cell membrane, leading to budding and formation of mature virions. In case of infection, new virions attach to target cells and after clathrin-mediated endocytosis their membrane fuses with the host endosomal membrane. This leads to the release of the nucleocapsid into the cytoplasm, followed by an uncoating event necessary for the genomic RNA to become accessible. The uncoating might be triggered by the interaction of capsid proteins with ribosomes. Binding of ribosomes would release the genomic RNA since the same region is genomic RNA-binding and ribosome-binding. Specifically inhibits interleukin-1 receptor-associated kinase 1/IRAK1-dependent signaling during viral entry, representing a means by which the alphaviruses may evade innate immune detection and activation prior to viral gene expression. Inhibits host transcription. Forms a tetrameric complex with XPO1/CRM1 and the nuclear import receptor importin. This complex blocks the central channel of host nuclear pores thereby inhibiting the receptor-mediated nuclear transport and thus the host mRNA and rRNA transcription. The inhibition of transcription is linked to a cytopathic effect on the host cell. Provides the signal sequence for the translocation of the precursor of protein E3/E2 to the host endoplasmic reticulum. Furin-cleaved E3 remains associated with spike glycoprotein E1 and mediates pH protection of the latter during the transport via the secretory pathway. After virion release from the host cell, the assembly protein E3 is gradually released in the extracellular space. Functionally, plays a role in viral attachment to target host cell, by binding to the cell receptor. Synthesized as a p62 precursor which is processed by furin at the cell membrane just before virion budding, giving rise to E2-E1 heterodimer. The p62-E1 heterodimer is stable, whereas E2-E1 is unstable and dissociate at low pH. p62 is processed at the last step, presumably to avoid E1 fusion activation before its final export to cell surface. E2 C-terminus contains a transitory transmembrane that would be disrupted by palmitoylation, resulting in reorientation of the C-terminal tail from lumenal to cytoplasmic side. This step is critical since E2 C-terminus is involved in budding by interacting with capsid proteins. This release of E2 C-terminus in cytoplasm occurs lately in protein export, and precludes premature assembly of particles at the endoplasmic reticulum membrane. Its function is as follows. Constitutive membrane protein involved in virus glycoprotein processing, cell permeabilization, and the budding of viral particles. Disrupts the calcium homeostasis of the cell, probably at the endoplasmic reticulum level. This leads to cytoplasmic calcium elevation. Because of its lipophilic properties, the 6K protein is postulated to influence the selection of lipids that interact with the transmembrane domains of the glycoproteins, which, in turn, affects the deformability of the bilayer required for the extreme curvature that occurs as budding proceeds. Present in low amount in virions, about 3% compared to viral glycoproteins. In terms of biological role, class II viral fusion protein. Fusion activity is inactive as long as E1 is bound to E2 in mature virion. After virus attachment to target cell and endocytosis, acidification of the endosome would induce dissociation of E1/E2 heterodimer and concomitant trimerization of the E1 subunits. This E1 trimer is fusion active, and promotes release of viral nucleocapsid in cytoplasm after endosome and viral membrane fusion. Efficient fusion requires the presence of cholesterol and sphingolipid in the target membrane. Fusion is optimal at levels of about 1 molecule of cholesterol per 2 molecules of phospholipids, and is specific for sterols containing a 3-beta-hydroxyl group. In Eastern equine encephalitis virus (strain va33[ten broeck]) (EEEV), this protein is Structural polyprotein.